Here is an 85-residue protein sequence, read N- to C-terminus: MPKLEMMLLVLLILPLCYIDAVGPPPPWNMEDEIIEHWQELHCHEISDLTPWILCSPEPLCGGKGCCAQEVCDCSGPVCTCPPCL.

The N-terminal stretch at Met1 to Ala21 is a signal peptide. Positions Val22 to Glu40 are excised as a propeptide.

It belongs to the conotoxin D superfamily. Post-translationally, contains 5 disulfide bonds. In terms of tissue distribution, expressed by the venom duct.

The protein resides in the secreted. Functionally, probable neurotoxin. This is Conotoxin Lt28.7 from Conus litteratus (Lettered cone).